A 134-amino-acid polypeptide reads, in one-letter code: Inner membrane protein YqjE (134 aa).

Residues 1-55 lie on the Cytoplasmic side of the membrane; sequence MADTHHAQGPGKSVLGIGQRIVSIMVEMVETRLRLAVVELEEEKANLFQLLLMLG. Residues 56 to 76 traverse the membrane as a helical segment; sequence LTMLFAAFGLMSLMVLIIWAV. At 77–83 the chain is on the periplasmic side; the sequence is DPQYRLN. A helical transmembrane segment spans residues 84 to 104; that stretch reads AMIATTVVLLLLALIGGIWTL. Residues 105–134 lie on the Cytoplasmic side of the membrane; it reads RKSRKSTLLRHTRHELANDRQLLEEESREQ.

It localises to the cell inner membrane. In Escherichia coli O157:H7, this protein is Inner membrane protein YqjE (yqjE).